The chain runs to 415 residues: Serine hydroxymethyltransferase (415 aa).

Residues Leu-117 and 121–123 (GHL) contribute to the (6S)-5,6,7,8-tetrahydrofolate site. Lys-226 carries the post-translational modification N6-(pyridoxal phosphate)lysine. A (6S)-5,6,7,8-tetrahydrofolate-binding site is contributed by 349 to 351 (SPF).

The protein belongs to the SHMT family. In terms of assembly, homodimer. Pyridoxal 5'-phosphate is required as a cofactor.

Its subcellular location is the cytoplasm. It carries out the reaction (6R)-5,10-methylene-5,6,7,8-tetrahydrofolate + glycine + H2O = (6S)-5,6,7,8-tetrahydrofolate + L-serine. It functions in the pathway one-carbon metabolism; tetrahydrofolate interconversion. Its pathway is amino-acid biosynthesis; glycine biosynthesis; glycine from L-serine: step 1/1. Its function is as follows. Catalyzes the reversible interconversion of serine and glycine with tetrahydrofolate (THF) serving as the one-carbon carrier. This reaction serves as the major source of one-carbon groups required for the biosynthesis of purines, thymidylate, methionine, and other important biomolecules. Also exhibits THF-independent aldolase activity toward beta-hydroxyamino acids, producing glycine and aldehydes, via a retro-aldol mechanism. This is Serine hydroxymethyltransferase from Geobacter sp. (strain M21).